The chain runs to 70 residues: UPF0352 protein PSHAa1818 (70 aa).

The protein belongs to the UPF0352 family.

This Pseudoalteromonas translucida (strain TAC 125) protein is UPF0352 protein PSHAa1818.